The chain runs to 362 residues: Dihydroorotate dehydrogenase (quinone) (362 aa).

FMN contacts are provided by residues 62–66 (AGYDK) and threonine 86. Lysine 66 provides a ligand contact to substrate. Residue 111-115 (NRLGF) coordinates substrate. FMN-binding residues include asparagine 139 and asparagine 170. Asparagine 170 is a binding site for substrate. Serine 173 acts as the Nucleophile in catalysis. Asparagine 175 is a binding site for substrate. Residues lysine 215 and serine 243 each coordinate FMN. Substrate is bound at residue 244 to 245 (NT). FMN contacts are provided by residues glycine 266, glycine 295, and 316–317 (YS).

The protein belongs to the dihydroorotate dehydrogenase family. Type 2 subfamily. As to quaternary structure, monomer. The cofactor is FMN.

The protein resides in the cell membrane. It catalyses the reaction (S)-dihydroorotate + a quinone = orotate + a quinol. It participates in pyrimidine metabolism; UMP biosynthesis via de novo pathway; orotate from (S)-dihydroorotate (quinone route): step 1/1. Functionally, catalyzes the conversion of dihydroorotate to orotate with quinone as electron acceptor. This is Dihydroorotate dehydrogenase (quinone) from Sinorhizobium medicae (strain WSM419) (Ensifer medicae).